A 140-amino-acid chain; its full sequence is Hemoglobin subunit alpha-D (140 aa).

In terms of domain architecture, Globin spans 1-140 (MLTDSDKKLV…VCTVLAEKYR (140 aa)). Heme b contacts are provided by His-57 and His-86.

The protein belongs to the globin family. As to quaternary structure, heterotetramer of two alpha-D chains and two beta chains. Red blood cells.

Its function is as follows. Involved in oxygen transport from the lung to the various peripheral tissues. The sequence is that of Hemoglobin subunit alpha-D (HBAD) from Columba livia (Rock dove).